The primary structure comprises 119 residues: Integration host factor subunit alpha (119 aa).

The segment at 96–119 is disordered; that stretch reads INGQQGSGKMNGEASHEQLSAEPE.

This sequence belongs to the bacterial histone-like protein family. As to quaternary structure, heterodimer of an alpha and a beta chain.

This protein is one of the two subunits of integration host factor, a specific DNA-binding protein that functions in genetic recombination as well as in transcriptional and translational control. The protein is Integration host factor subunit alpha of Bradyrhizobium sp. (strain BTAi1 / ATCC BAA-1182).